An 82-amino-acid chain; its full sequence is Large ribosomal subunit protein uL23 (82 aa).

This sequence belongs to the universal ribosomal protein uL23 family. In terms of assembly, part of the 50S ribosomal subunit. Contacts protein L29.

Its function is as follows. Binds to 23S rRNA. One of the proteins that surrounds the polypeptide exit tunnel on the outside of the ribosome. The polypeptide is Large ribosomal subunit protein uL23 (Methanosarcina acetivorans (strain ATCC 35395 / DSM 2834 / JCM 12185 / C2A)).